Consider the following 618-residue polypeptide: Auxin efflux carrier component 3a (618 aa).

At 1 to 6 (MISGHD) the chain is on the extracellular side. Residues 7–27 (FYTVMAAVVPLYVAMFLAYGS) form a helical membrane-spanning segment. Over 28-38 (VRWWGIFTPDQ) the chain is Cytoplasmic. A helical transmembrane segment spans residues 39–59 (CSGINRFVAIFAVPLLSFHFI). A (indol-3-yl)acetate-binding site is contributed by Val-51. At 60 to 70 (STNDPYAMNLR) the chain is on the extracellular side. The helical transmembrane segment at 71 to 90 (FLAADTLQKLLVLAGLAAWS) threads the bilayer. At 91 to 104 (RLPSRTGAPRLDWS) the chain is on the cytoplasmic side. A helical membrane pass occupies residues 105–125 (ITLFSLSTLPNTLVMGIPLLI). (indol-3-yl)acetate contacts are provided by Asn-115 and Leu-117. Over 126–134 (AMYGPYSGS) the chain is Extracellular. The chain crosses the membrane as a helical span at residues 135–155 (LMVQIVVLQCIIWYTLMLFLF). Residue Tyr-148 participates in (indol-3-yl)acetate binding. Over 156–478 (EFRAARMLIA…LIRNPNTYSS (323 aa)) the chain is Cytoplasmic. Over residues 281–293 (SLQSSRGPTPRQS) the composition is skewed to polar residues. The interval 281–312 (SLQSSRGPTPRQSNFDEHSARPPKPPATTTGA) is disordered. A helical transmembrane segment spans residues 479 to 499 (LLGLAWSLVAFRWHVSMPAIV). Residues 500-502 (EKS) lie on the Extracellular side of the membrane. The chain crosses the membrane as a helical span at residues 503-523 (ISILSDAGLGMAMFSLGLFMA). Over 524-539 (LQPSIIACGKSAAVVS) the chain is Cytoplasmic. A helical membrane pass occupies residues 540-560 (MAVRFLAGPAVMAAASIAIGL). The Extracellular segment spans residues 561–563 (RGT). Residues 564 to 584 (LLHVAIVQAALPQGIVPFVFA) traverse the membrane as a helical segment. Residues Ile-578 and Val-579 each coordinate (indol-3-yl)acetate. The Cytoplasmic segment spans residues 585–597 (KEYNVHPAILSTA). A helical transmembrane segment spans residues 598–618 (VIFGMLIALPITLLYYILLGL).

Belongs to the auxin efflux carrier (TC 2.A.69.1) family. As to quaternary structure, homodimer. In terms of tissue distribution, expressed in coleoptiles, roots, vascular bundles of leaves, shoots, lamina joints and vascular bundles of the lemma and filament. Expressed in stem bases, stems, leaves and young panicles.

The protein localises to the cell membrane. Acts as a component of the auxin efflux carrier. Involved in the polar auxin transport which may regulate crown root development and response to water stress. This chain is Auxin efflux carrier component 3a, found in Oryza sativa subsp. japonica (Rice).